A 294-amino-acid chain; its full sequence is Lysozyme M1 (294 aa).

The region spanning 81–294 (GVQGIDVSHW…RLLALANNTA (214 aa)) is the Ch-type lysozyme domain. Residues D86, D175, and E177 contribute to the active site. C185 and C224 are oxidised to a cystine.

The protein belongs to the glycosyl hydrolase 25 family.

It localises to the secreted. The enzyme catalyses Hydrolysis of (1-&gt;4)-beta-linkages between N-acetylmuramic acid and N-acetyl-D-glucosamine residues in a peptidoglycan and between N-acetyl-D-glucosamine residues in chitodextrins.. In terms of biological role, this enzyme has both lysozyme (acetylmuramidase) and diacetylmuramidase activities. The sequence is that of Lysozyme M1 (acm) from Streptomyces globisporus.